The sequence spans 315 residues: 1,2-dihydroxy-3,5-cyclohexadiene-1,4-dicarboxylate dehydrogenase (315 aa).

Positions 159, 203, and 255 each coordinate a divalent metal cation.

Belongs to the PdxA family.

The enzyme catalyses (3S,4R)-3,4-dihydroxycyclohexa-1,5-diene-1,4-dicarboxylate + NAD(+) = 3,4-dihydroxybenzoate + CO2 + NADH. Functionally, involved in the degradation of terephthalate (TPA) via the protocatechuate (PCA) 4,5-cleavage pathway. Catalyzes the dehydrogenation of 1,2-dihydroxy-3,5-cyclohexadiene-1,4-dicarboxylate (DCD) to yield protocatechuate (PCA). This Comamonas sp protein is 1,2-dihydroxy-3,5-cyclohexadiene-1,4-dicarboxylate dehydrogenase (tphBI).